The following is a 231-amino-acid chain: Large ribosomal subunit protein uL1 (231 aa).

This sequence belongs to the universal ribosomal protein uL1 family. As to quaternary structure, part of the 50S ribosomal subunit.

Binds directly to 23S rRNA. The L1 stalk is quite mobile in the ribosome, and is involved in E site tRNA release. In terms of biological role, protein L1 is also a translational repressor protein, it controls the translation of the L11 operon by binding to its mRNA. This chain is Large ribosomal subunit protein uL1, found in Thioalkalivibrio sulfidiphilus (strain HL-EbGR7).